The sequence spans 525 residues: Rho guanine nucleotide exchange factor gef3 (525 aa).

Residues 72–268 (AIISVLEEFR…EIASQRMNEL (197 aa)) enclose the DH domain.

Its subcellular location is the cytoplasm. Functionally, has a role in the control of cell polarity and cytokinesis. Involved in bipolar growth and septum formation. This is Rho guanine nucleotide exchange factor gef3 (gef3) from Schizosaccharomyces pombe (strain 972 / ATCC 24843) (Fission yeast).